Reading from the N-terminus, the 176-residue chain is Cytochrome c oxidase subunit 4 isoform 2, mitochondrial (176 aa).

The N-terminal 28 residues, 1–28 (MLRLTAGRVRSLLAGRATAAFSTSSARM), are a transit peptide targeting the mitochondrion. Residues 29 to 106 (ASHDLEVAES…TYSEMKQPSS (78 aa)) lie on the Mitochondrial matrix side of the membrane. A helical transmembrane segment spans residues 107 to 132 (EWKTVFGGIFIFLGFTGLVVWWQALY). Residues 133 to 176 (VYPPRPRTFDDEWKAKQLKRMLDMRVNPIEGFSAKWDYEKGQWK) are Mitochondrial intermembrane-facing.

This sequence belongs to the cytochrome c oxidase IV family. As to quaternary structure, component of the cytochrome c oxidase (complex IV, CIV), a multisubunit enzyme composed of 14 subunits. The complex is composed of a catalytic core of 3 subunits MT-CO1, MT-CO2 and MT-CO3, encoded in the mitochondrial DNA, and 11 supernumerary subunits COX4I, COX5A, COX5B, COX6A, COX6B, COX6C, COX7A, COX7B, COX7C, COX8 and NDUFA4, which are encoded in the nuclear genome. The complex exists as a monomer or a dimer and forms supercomplexes (SCs) in the inner mitochondrial membrane with NADH-ubiquinone oxidoreductase (complex I, CI) and ubiquinol-cytochrome c oxidoreductase (cytochrome b-c1 complex, complex III, CIII), resulting in different assemblies (supercomplex SCI(1)III(2)IV(1) and megacomplex MCI(2)III(2)IV(2)).

Its subcellular location is the mitochondrion inner membrane. Its pathway is energy metabolism; oxidative phosphorylation. Its function is as follows. Component of the cytochrome c oxidase, the last enzyme in the mitochondrial electron transport chain which drives oxidative phosphorylation. The respiratory chain contains 3 multisubunit complexes succinate dehydrogenase (complex II, CII), ubiquinol-cytochrome c oxidoreductase (cytochrome b-c1 complex, complex III, CIII) and cytochrome c oxidase (complex IV, CIV), that cooperate to transfer electrons derived from NADH and succinate to molecular oxygen, creating an electrochemical gradient over the inner membrane that drives transmembrane transport and the ATP synthase. Cytochrome c oxidase is the component of the respiratory chain that catalyzes the reduction of oxygen to water. Electrons originating from reduced cytochrome c in the intermembrane space (IMS) are transferred via the dinuclear copper A center (CU(A)) of subunit 2 and heme A of subunit 1 to the active site in subunit 1, a binuclear center (BNC) formed by heme A3 and copper B (CU(B)). The BNC reduces molecular oxygen to 2 water molecules using 4 electrons from cytochrome c in the IMS and 4 protons from the mitochondrial matrix. This chain is Cytochrome c oxidase subunit 4 isoform 2, mitochondrial, found in Thunnus obesus (Bigeye tuna).